The following is an 801-amino-acid chain: Protocadherin beta-8 (801 aa).

The first 29 residues, 1–29 (MEASGKLICRQRQVLFSFLLLGLSLAGAA), serve as a signal peptide directing secretion. Residues 30-691 (EPRSYSVVEE…GQADSLTVYL (662 aa)) are Extracellular-facing. Cadherin domains are found at residues 36-134 (VVEE…SPVF), 139-243 (MLVK…APEF), 248-348 (YRVQ…APEV), 353-452 (FTSP…APAF), and 457-562 (YTLF…SPFV). A disulfide bridge connects residues Cys-97 and Cys-103. 2 N-linked (GlcNAc...) asparagine glycosylation sites follow: Asn-419 and Asn-437. Asn-568 carries N-linked (GlcNAc...) asparagine glycosylation. The 104-residue stretch at 569-672 (SSAPCTELVP…LVDGFSQPYL (104 aa)) folds into the Cadherin 6 domain. Residues 692 to 710 (VVALASVSSLFLFSVLLFV) form a helical membrane-spanning segment. Topologically, residues 711–801 (AVRLCRRSRA…NGFGFSLQLK (91 aa)) are cytoplasmic.

As to quaternary structure, forms homodimers in trans (molecules expressed by two different cells). Forms promiscuous heterodimers in cis (at the plasma membrane of the same cell) with other protocadherins.

The protein localises to the cell membrane. Its function is as follows. Calcium-dependent cell-adhesion protein involved in cells self-recognition and non-self discrimination. Thereby, it is involved in the establishment and maintenance of specific neuronal connections in the brain. This chain is Protocadherin beta-8, found in Pan troglodytes (Chimpanzee).